The primary structure comprises 778 residues: uncharacterized protein (778 aa).

Polar residues-rich tracts occupy residues 1–11, 18–34, and 41–51; these read MPISSPGTRCS, TLQQ…QSLG, and GSITENYVQDS. The interval 1-60 is disordered; the sequence is MPISSPGTRCSSDLKDPTLQQYSAESVSTEQSLGTFEESKGSITENYVQDSSVDEHDDGN. 2 helical membrane passes run 356–381 and 401–423; these read YILM…APII and GFLA…GAHI.

This sequence belongs to the TMCO4 family.

Its subcellular location is the golgi apparatus membrane. This is an uncharacterized protein from Schizosaccharomyces pombe (strain 972 / ATCC 24843) (Fission yeast).